Here is a 633-residue protein sequence, read N- to C-terminus: MKAIKKSLTEEEYLYLDFSHQTKGCIFPLHTSVTLFLLSYCDCKIFKICLVVTKEVSTDSSLLRDDLIQDVEIQIISRQELPPIVQNCCLPAVVERSDNFCRAGLAVVLRHIIQKSYEADPLKKELLELLGFKKTCLKACAEVSQWTRLCELTIPLAIENFLRESSDQPPTIPVEILQLEKKLSEPVRVHNDDKLRRQKLKQQKADGVGPPLTKGKAKSKVHTQETSEELDSSSESLELKVAFSKLTVQEEPATTNREPSHIRKAKASDLPPLEHVFAEGLYFTLADIVLLPCIHHFLVIICKKFSEKLVEFPLLASWYQRIQEVPRVKTAASKCGIQFLHLPKLLTVSTEQRPNLSEVPGVEGHSDPLFIGGPRPTMAKLMEKGIEVMFSPHPCPTWTVDWNVLPAAVSPKEGKMSSDRALRKQQQLNNLVYVVTNQAKPGDRIVDFCSGGGHVGIVLAHMLPSCQVTLIENKELSLIRAKKRSDELGLSNIWFIQANMEYFTGMFNIGVALHACGVATDMVIEHCIKTRASFVTCPCCYGFIQNTSKFNFPKSEQFKKTLSYKEHMILCRFADQTAVQLPPQRRLIGKQCMCLVDLDRARAAEECGYSVQVISMEPESCSPKNNMIVGVPI.

One can recognise a GST C-terminal domain in the interval 130-332 (LGFKKTCLKA…QEVPRVKTAA (203 aa)). Residues 190–232 (HNDDKLRRQKLKQQKADGVGPPLTKGKAKSKVHTQETSEELDS) form a disordered region. A Phosphoserine modification is found at serine 233.

The protein belongs to the GSTCD family.

It is found in the cytoplasm. In Macaca fascicularis (Crab-eating macaque), this protein is Glutathione S-transferase C-terminal domain-containing protein (GSTCD).